The primary structure comprises 546 residues: Carboxypeptidase Y homolog A (546 aa).

A signal peptide spans 1–17 (MKLLASTVLVGAAAASI). Positions 18-132 (TPQQQVLQNP…KLEQYNLRAK (115 aa)) are excised as a propeptide. Cystine bridges form between Cys186/Cys426, Cys320/Cys334, Cys344/Cys367, Cys351/Cys360, and Cys389/Cys396. An N-linked (GlcNAc...) asparagine glycan is attached at Asn217. Ser273 is a catalytic residue. Residue Asp465 is part of the active site. Residue Asn512 is glycosylated (N-linked (GlcNAc...) asparagine). His523 is an active-site residue.

Belongs to the peptidase S10 family.

The protein resides in the vacuole. The enzyme catalyses Release of a C-terminal amino acid with broad specificity.. In terms of biological role, vacuolar carboxypeptidase involved in degradation of small peptides. Digests preferentially peptides containing an aliphatic or hydrophobic residue in P1' position, as well as methionine, leucine or phenylalanine in P1 position of ester substrate. In Botryotinia fuckeliana (strain B05.10) (Noble rot fungus), this protein is Carboxypeptidase Y homolog A (CPYA).